The chain runs to 974 residues: Apical junction component 1 homolog (974 aa).

Disordered stretches follow at residues 23 to 137, 201 to 233, and 306 to 326; these read PGLT…PSYP, ARSSRSCAPRETTSWARTAPQFHGLTVPGPRHV, and CSRPYLSEEPPRPSPRRGGSY. S52 carries the phosphoserine modification. Over residues 69–79 the composition is skewed to pro residues; sequence EPPPPEPAPPR. Positions 116 to 134 are enriched in basic and acidic residues; sequence RGREAQRAVRVEGSPRREP. Residue S129 is modified to Phosphoserine. Over residues 201–216 the composition is skewed to polar residues; the sequence is ARSSRSCAPRETTSWA. An Omega-N-methylarginine modification is found at R322. Phosphoserine is present on residues S468, S509, and S512. The interval 539–576 is disordered; that stretch reads DLRSVDRPTAKGWELPGGRPRQPVSTVPEGPASSRQRS. S593 is modified (phosphoserine). Residues 618–661 are disordered; that stretch reads AGPGGATLLAPSRSPPASAGSTEEPTGSGEAADASPEPSADEDD. Residues 623 to 636 show a composition bias toward low complexity; sequence ATLLAPSRSPPASA. Residue R749 is modified to Asymmetric dimethylarginine; alternate. Residue R749 is modified to Omega-N-methylarginine; alternate.

The protein localises to the apical cell membrane. Its subcellular location is the cell projection. The protein resides in the cilium. It is found in the cell junction. It localises to the adherens junction. May be involved in the control of adherens junction integrity. The polypeptide is Apical junction component 1 homolog (Ajm1) (Mus musculus (Mouse)).